The primary structure comprises 169 residues: uncharacterized protein (169 aa).

An HTH asnC-type domain is found at 18–79; it reads LDRADVALLN…IVSPKAVGRP (62 aa). A DNA-binding region (H-T-H motif) is located at residues 37 to 56; sequence SEELADKVGLSPTACQRRLK.

This is an uncharacterized protein from Sinorhizobium fredii (strain NBRC 101917 / NGR234).